The primary structure comprises 502 residues: ATP synthase subunit alpha (502 aa).

The disordered stretch occupies residues 115-134 (IDGQGPINTTKTRPVEQKAT). Position 169–176 (169–176 (GDRQTGKT)) interacts with ATP.

The protein belongs to the ATPase alpha/beta chains family. In terms of assembly, F-type ATPases have 2 components, CF(1) - the catalytic core - and CF(0) - the membrane proton channel. CF(1) has five subunits: alpha(3), beta(3), gamma(1), delta(1), epsilon(1). CF(0) has three main subunits: a(1), b(2) and c(9-12). The alpha and beta chains form an alternating ring which encloses part of the gamma chain. CF(1) is attached to CF(0) by a central stalk formed by the gamma and epsilon chains, while a peripheral stalk is formed by the delta and b chains.

The protein resides in the cell membrane. The catalysed reaction is ATP + H2O + 4 H(+)(in) = ADP + phosphate + 5 H(+)(out). In terms of biological role, produces ATP from ADP in the presence of a proton gradient across the membrane. The alpha chain is a regulatory subunit. The polypeptide is ATP synthase subunit alpha (Staphylococcus haemolyticus (strain JCSC1435)).